Reading from the N-terminus, the 109-residue chain is ATP-dependent Clp protease adapter protein ClpS (109 aa).

The disordered stretch occupies residues 1–23; it reads MTERKHDDTGVEEGTGLATKTRP.

Belongs to the ClpS family. Binds to the N-terminal domain of the chaperone ClpA.

Its function is as follows. Involved in the modulation of the specificity of the ClpAP-mediated ATP-dependent protein degradation. The polypeptide is ATP-dependent Clp protease adapter protein ClpS (Maricaulis maris (strain MCS10) (Caulobacter maris)).